The primary structure comprises 349 residues: Putative inosamine-phosphate amidinotransferase 2 (349 aa).

The protein belongs to the amidinotransferase family.

It catalyses the reaction 1-amino-1-deoxy-scyllo-inositol 4-phosphate + L-arginine = 1-guanidino-1-deoxy-scyllo-inositol 4-phosphate + L-ornithine. Its pathway is antibiotic biosynthesis; streptomycin biosynthesis. It is not obvious if strB2 participates in streptomycin biosynthesis as an inosamine-phosphate amidinotransferase. Attempt to measure its activity have failed and the nucleophilic cysteine which is the key residue for amidine transfer is not conserved but replaced by a glycine residue. In Streptomyces griseus, this protein is Putative inosamine-phosphate amidinotransferase 2 (strB2).